The sequence spans 383 residues: Adaptive-response sensory kinase SasA (383 aa).

The region spanning 152-365 (MVAHELRTPL…CFTFNVPIWQ (214 aa)) is the Histidine kinase domain. Phosphohistidine; by autocatalysis is present on His-155.

As to quaternary structure, homooligomerizes. Interacts with KaiC. Participates in the KaiABC clock complex, whose core is composed of a KaiC homohexamer, 6 KaiB and up to 6 KaiA dimers. SasA and KaiB(fs) compete to bind to KaiC.

The catalysed reaction is ATP + protein L-histidine = ADP + protein N-phospho-L-histidine.. Functionally, member of the two-component regulatory system SasA/RpaA involved in genome-wide circadian gene expression. One of several clock output pathways. Participates in the Kai clock protein complex, the main circadian regulator in cyanobacteria, via its interaction with KaiC. KaiC enhances the autophosphorylation activity of SasA, which then transfers its phosphate group to RpaA to activate it. In addition to its output function, recruits fold-shifted KaiB (KaiB(fs)) to KaiC to cooperatively form the KaiB(6):KaiC(6) complex (independent of SasA kinase activity). Required for robustness of the circadian rhythm of gene expression and is involved in clock output, also required for adaptation to light/dark cycles. This Synechococcus sp. (strain CC9311) protein is Adaptive-response sensory kinase SasA.